The sequence spans 204 residues: MEKEKGLLIVLSGPAGVGKGTVCSALRKHDTNIQYSVSATTRAPRKGEVDGVNYFFKSREQFEAMIEKEELLEWAEYVGNYYGTPIQYVRETIDSGKDIILEIEVQGALKVRERFPEGVFIFLMPPSLAELRSRIVGRGTETEEVINKRMNVAKEEIEMMKKYDYVVENDEVELAVDRIKAIVTAEHCKRERLIEKYHQLVEVE.

The Guanylate kinase-like domain occupies 6-184; that stretch reads GLLIVLSGPA…AVDRIKAIVT (179 aa). 13–20 serves as a coordination point for ATP; sequence GPAGVGKG.

This sequence belongs to the guanylate kinase family.

Its subcellular location is the cytoplasm. It catalyses the reaction GMP + ATP = GDP + ADP. Essential for recycling GMP and indirectly, cGMP. This is Guanylate kinase (gmk) from Halalkalibacterium halodurans (strain ATCC BAA-125 / DSM 18197 / FERM 7344 / JCM 9153 / C-125) (Bacillus halodurans).